Consider the following 405-residue polypeptide: Phosphoglycerate kinase (405 aa).

Residues 21–23 (DFN), R38, 59–62 (HQSR), R116, and R156 each bind substrate. ATP is bound by residues E330 and 355–358 (GGHT).

Belongs to the phosphoglycerate kinase family. Monomer.

Its subcellular location is the cytoplasm. The catalysed reaction is (2R)-3-phosphoglycerate + ATP = (2R)-3-phospho-glyceroyl phosphate + ADP. The protein operates within carbohydrate degradation; glycolysis; pyruvate from D-glyceraldehyde 3-phosphate: step 2/5. The sequence is that of Phosphoglycerate kinase from Methanocorpusculum labreanum (strain ATCC 43576 / DSM 4855 / Z).